An 87-amino-acid polypeptide reads, in one-letter code: DNA-directed RNA polymerase subunit omega (87 aa).

It belongs to the RNA polymerase subunit omega family. As to quaternary structure, the RNAP catalytic core consists of 2 alpha, 1 beta, 1 beta' and 1 omega subunit. When a sigma factor is associated with the core the holoenzyme is formed, which can initiate transcription.

The catalysed reaction is RNA(n) + a ribonucleoside 5'-triphosphate = RNA(n+1) + diphosphate. In terms of biological role, promotes RNA polymerase assembly. Latches the N- and C-terminal regions of the beta' subunit thereby facilitating its interaction with the beta and alpha subunits. The protein is DNA-directed RNA polymerase subunit omega of Pseudomonas entomophila (strain L48).